Reading from the N-terminus, the 695-residue chain is Frizzled and smoothened-like protein O (695 aa).

A signal peptide spans 1–23 (MKKLNYLLIVSFIFILNLLISKS). At 24–233 (QVLIDVTAKC…KEYKTKFYSE (210 aa)) the chain is on the extracellular side. One can recognise an FZ domain in the interval 28–173 (DVTAKCELID…ANEEIQCSGP (146 aa)). Intrachain disulfides connect Cys33–Cys96, Cys42–Cys89, Cys80–Cys125, Cys114–Cys170, and Cys118–Cys138. The N-linked (GlcNAc...) asparagine glycan is linked to Asn47. Asn137 and Asn178 each carry an N-linked (GlcNAc...) asparagine glycan. Residues 234–254 (AILFSFSTACSFYLIFTFGVF) traverse the membrane as a helical segment. Residues 255–262 (PNKYTNRN) lie on the Cytoplasmic side of the membrane. A helical membrane pass occupies residues 263–283 (WIIVYLGITAICLAISYAVQE). Residues 284 to 307 (ARYGGGDWRCTSDPGRYKSSEDGT) are Extracellular-facing. The chain crosses the membrane as a helical span at residues 308–328 (CILGGFFFQIGGLGTILFLSL). Residues 329-343 (YSFDMFLTMNMMTNK) are Cytoplasmic-facing. Residues 344 to 364 (YFIQTSVGMWALIIFYALLPI) traverse the membrane as a helical segment. At 365–387 (KHYESSIASAGCWLSNEDNMFWQ) the chain is on the extracellular side. A helical membrane pass occupies residues 388-408 (YFCFYVPSYVATFFLGVFIIT). Topologically, residues 409-435 (SIYKVFKMTVMFKSIKDKRILLLNIRS) are cytoplasmic. The chain crosses the membrane as a helical span at residues 436–456 (IIFLIAIMFCVSFSTMYPLYV). At 457 to 500 (TYNGDDFSKSVEVYVTCLYANIPNGNEVCPQIVFPQFSLRYMNA) the chain is on the extracellular side. Residues 501 to 521 (ITMAIIGIVGLIGLGIDPHIL) traverse the membrane as a helical segment. Over 522-695 (QIYRESIRFK…NIERINSDNV (174 aa)) the chain is Cytoplasmic. The segment covering 545–556 (SPQPLKQGSTTD) has biased composition (polar residues). Residues 545–695 (SPQPLKQGST…NIERINSDNV (151 aa)) are disordered. The segment covering 593-608 (NLSASSESSNNLLNQS) has biased composition (low complexity). Residues 609-625 (TPGNLNINESISSIDTS) are compositionally biased toward polar residues. Low complexity predominate over residues 626 to 686 (NNNNNNNNNN…NNNNNNNNNN (61 aa)). A coiled-coil region spans residues 653 to 691 (NNNNNNNNNNNNNNNNNNNNYSNNNNNNNNNNNNIERIN).

The protein belongs to the G-protein coupled receptor Fz/Smo family.

Its subcellular location is the membrane. The protein is Frizzled and smoothened-like protein O (fslO) of Dictyostelium discoideum (Social amoeba).